Consider the following 478-residue polypeptide: JmjC domain-containing histone demethylation protein 1 (478 aa).

The PHD-type zinc-finger motif lies at 5–68 (SESCPLCKVH…IYHCPECVPK (64 aa)). One can recognise a JmjC domain in the interval 217–383 (SDVAKLGVDF…MQLKINEIER (167 aa)). A substrate-binding site is contributed by Thr266. 2 residues coordinate Fe cation: His269 and Asp271. Lys286 lines the substrate pocket. Residue His351 participates in Fe cation binding.

The protein belongs to the JHDM1 histone demethylase family. It depends on Fe(2+) as a cofactor.

It is found in the nucleus. It carries out the reaction N(6),N(6)-dimethyl-L-lysyl(36)-[histone H3] + 2 2-oxoglutarate + 2 O2 = L-lysyl(36)-[histone H3] + 2 formaldehyde + 2 succinate + 2 CO2. In terms of biological role, histone demethylase that specifically demethylates 'Lys-36' of histone H3, thereby playing a central role in histone code. This Candida albicans (strain SC5314 / ATCC MYA-2876) (Yeast) protein is JmjC domain-containing histone demethylation protein 1 (JHD1).